We begin with the raw amino-acid sequence, 328 residues long: NADH-quinone oxidoreductase subunit H 2 (328 aa).

8 consecutive transmembrane segments (helical) span residues 3–23 (LIVA…ILLL), 77–97 (FLFK…FAAI), 119–139 (VALL…IFGG), 165–185 (MGFA…LDIV), 191–211 (VWNV…GLAE), 250–270 (MVLV…GVLI), 272–292 (LPPL…FMWF), and 307–327 (IGWK…GVVF).

Belongs to the complex I subunit 1 family. NDH-1 is composed of 14 different subunits. Subunits NuoA, H, J, K, L, M, N constitute the membrane sector of the complex.

It localises to the cell inner membrane. The enzyme catalyses a quinone + NADH + 5 H(+)(in) = a quinol + NAD(+) + 4 H(+)(out). Its function is as follows. NDH-1 shuttles electrons from NADH, via FMN and iron-sulfur (Fe-S) centers, to quinones in the respiratory chain. The immediate electron acceptor for the enzyme in this species is believed to be ubiquinone. Couples the redox reaction to proton translocation (for every two electrons transferred, four hydrogen ions are translocated across the cytoplasmic membrane), and thus conserves the redox energy in a proton gradient. This subunit may bind ubiquinone. The protein is NADH-quinone oxidoreductase subunit H 2 of Rhizobium meliloti (strain 1021) (Ensifer meliloti).